Here is a 487-residue protein sequence, read N- to C-terminus: Aromatic-L-amino-acid decarboxylase (487 aa).

M1 is modified (N-acetylmethionine). 2 tandem repeats follow at residues 58-115 and 118-178. Residues 58-178 are 2 X approximate tandem repeats; it reads EDIEKIIMPG…AASPELMQAA (121 aa). Substrate is bound at residue T82. The pyridoxal 5'-phosphate site is built by A148 and S149. H192 contacts substrate. Pyridoxal 5'-phosphate contacts are provided by T246 and N300. Position 303 is an N6-(pyridoxal phosphate)lysine (K303).

This sequence belongs to the group II decarboxylase family. As to quaternary structure, homodimer. Pyridoxal 5'-phosphate is required as a cofactor.

The enzyme catalyses L-dopa + H(+) = dopamine + CO2. The catalysed reaction is 5-hydroxy-L-tryptophan + H(+) = serotonin + CO2. The protein operates within catecholamine biosynthesis; dopamine biosynthesis; dopamine from L-tyrosine: step 2/2. Functionally, catalyzes the decarboxylation of L-3,4-dihydroxyphenylalanine (DOPA) to dopamine and L-5-hydroxytryptophan to serotonin. This chain is Aromatic-L-amino-acid decarboxylase (DDC), found in Bos taurus (Bovine).